Consider the following 363-residue polypeptide: Proline/serine-rich coiled-coil protein 1 (363 aa).

The residue at position 22 (Ser22) is a Phosphoserine. Repeat unit 1 spans residues 38 to 41 (PEKP). A disordered region spans residues 39–67 (EKPLRRGLSHRSDPNAVAPAPQGVRLSLG). A Phosphoserine modification is found at Leu42. Gly45 carries the post-translational modification Phosphothreonine. Phosphoserine is present on residues Ser47, Ser65, Ser70, Ser98, Ser122, and Ser140. Repeat 2 spans residues 68-71 (PLSP). A coiled-coil region spans residues 70–94 (SPEKLEEILDEANRLAAQLEQCALQ). Residues 95 to 363 (DRESAGEGLG…RKVAVPGPTR (269 aa)) form a disordered region. Positions 103-246 (LGPRRVKPSP…HPSPPGPPTP (144 aa)) are 4 X 4 AA repeats of P-X-X-P. Residues 112-124 (PRRETFVLKDSPV) show a composition bias toward basic and acidic residues. Over residues 133-148 (SLTRSTPSPSSLTPRL) the composition is skewed to low complexity. Position 145 is a phosphothreonine (Thr145). Ser186 and Ser190 each carry phosphoserine. Polar residues predominate over residues 186–196 (SPASSPLTRST). Low complexity predominate over residues 197–210 (PPVRGRAGPSGRAA). Ser212 is modified (phosphoserine). A Phosphothreonine modification is found at Thr215. 2 repeat units span residues 238–241 (PSPP) and 243–246 (PPTP).

Belongs to the PSRC1 family. In terms of assembly, interacts with APC2. Interacts with KIF2A. Interacts with ANKRD53; recruits ANKRD53 to the spindle during mitosis. Post-translationally, phosphorylated during mitosis. As to expression, widely expressed in adult and fetal tissues, with highest expression in the adult brain and fetal thymus. Not detected in adult skeletal muscle.

The protein localises to the cytoplasm. The protein resides in the cytoskeleton. Its subcellular location is the spindle. It localises to the spindle pole. Required for normal progression through mitosis. Required for normal congress of chromosomes at the metaphase plate, and for normal rate of chromosomal segregation during anaphase. Plays a role in the regulation of mitotic spindle dynamics. Increases the rate of turnover of microtubules on metaphase spindles, and contributes to the generation of normal tension across sister kinetochores. Recruits KIF2A and ANKRD53 to the mitotic spindle and spindle poles. May participate in p53/TP53-regulated growth suppression. This is Proline/serine-rich coiled-coil protein 1 (PSRC1) from Homo sapiens (Human).